The primary structure comprises 282 residues: Putative 4-diphosphocytidyl-2-C-methyl-D-erythritol kinase (282 aa).

Residue lysine 9 is part of the active site. 93–103 contacts ATP; that stretch reads PVSAGLAGGSA. The active site involves aspartate 135.

Belongs to the GHMP kinase family. IspE subfamily.

It carries out the reaction 4-CDP-2-C-methyl-D-erythritol + ATP = 4-CDP-2-C-methyl-D-erythritol 2-phosphate + ADP + H(+). Its function is as follows. Catalyzes the phosphorylation of the position 2 hydroxy group of 4-diphosphocytidyl-2C-methyl-D-erythritol. The sequence is that of Putative 4-diphosphocytidyl-2-C-methyl-D-erythritol kinase from Staphylococcus aureus (strain bovine RF122 / ET3-1).